Reading from the N-terminus, the 1357-residue chain is DNA-directed RNA polymerase subunit beta (1357 aa).

Belongs to the RNA polymerase beta chain family. In terms of assembly, the RNAP catalytic core consists of 2 alpha, 1 beta, 1 beta' and 1 omega subunit. When a sigma factor is associated with the core the holoenzyme is formed, which can initiate transcription.

The catalysed reaction is RNA(n) + a ribonucleoside 5'-triphosphate = RNA(n+1) + diphosphate. DNA-dependent RNA polymerase catalyzes the transcription of DNA into RNA using the four ribonucleoside triphosphates as substrates. The chain is DNA-directed RNA polymerase subunit beta from Pseudomonas aeruginosa (strain ATCC 15692 / DSM 22644 / CIP 104116 / JCM 14847 / LMG 12228 / 1C / PRS 101 / PAO1).